Here is a 560-residue protein sequence, read N- to C-terminus: Diphtheria toxin (560 aa).

The first 25 residues, 1 to 25 (MSRKLFASILIGALLGIGAPPSAHA), serve as a signal peptide directing secretion. Residues H46 and Y90 each contribute to the NAD(+) site. The active site involves E173. Intrachain disulfides connect C211–C226 and C486–C496.

In terms of assembly, homodimer.

It carries out the reaction diphthamide-[translation elongation factor 2] + NAD(+) = N-(ADP-D-ribosyl)diphthamide-[translation elongation factor 2] + nicotinamide + H(+). Its function is as follows. Diphtheria toxin, produced by a phage infecting Corynebacterium diphtheriae, is a proenzyme that, after activation, catalyzes the covalent attachment of the ADP ribose moiety of NAD to elongation factor 2. Fragment A is responsible for enzymatic ADP-ribosylation of elongation factor 2, while fragment B is responsible for binding of toxin to cell receptors and entry of fragment A. The polypeptide is Diphtheria toxin (Corynephage omega).